A 138-amino-acid polypeptide reads, in one-letter code: Large ribosomal subunit protein uL16 (138 aa).

This sequence belongs to the universal ribosomal protein uL16 family. As to quaternary structure, part of the 50S ribosomal subunit.

In terms of biological role, binds 23S rRNA and is also seen to make contacts with the A and possibly P site tRNAs. In Mycoplasmoides gallisepticum (strain R(low / passage 15 / clone 2)) (Mycoplasma gallisepticum), this protein is Large ribosomal subunit protein uL16.